A 131-amino-acid chain; its full sequence is Snaclec coagulation factor IX/factor X-binding protein subunit A (131 aa).

The C-type lectin domain occupies aspartate 1–isoleucine 131. 3 disulfides stabilise this stretch: cysteine 2–cysteine 13, cysteine 30–cysteine 129, and cysteine 104–cysteine 121. Ca(2+)-binding residues include serine 41, glutamate 43, and glutamate 47. A Ca(2+)-binding site is contributed by glutamate 130.

The protein belongs to the snaclec family. In terms of assembly, heterodimer of subunits A and B; disulfide-linked. In terms of tissue distribution, expressed by the venom gland.

It is found in the secreted. Functionally, anticoagulant protein which binds to coagulation factor IX (F9) and coagulation factor X (F10) in the presence of calcium. It may bind the gamma-carboxyglutamic acid-domain regions of factors with a 1 to 1 stoichiometry. The dissociation constant (K(d)) are 6.6 nM for factor IX (F9) and 125 nM for factor X (F10). Does not bind carbohydrates. The chain is Snaclec coagulation factor IX/factor X-binding protein subunit A from Echis carinatus (Saw-scaled viper).